Consider the following 389-residue polypeptide: NADH-quinone oxidoreductase subunit D (389 aa).

The protein belongs to the complex I 49 kDa subunit family. In terms of assembly, NDH-1 is composed of 14 different subunits. Subunits NuoB, C, D, E, F, and G constitute the peripheral sector of the complex.

The protein resides in the cell inner membrane. It carries out the reaction a quinone + NADH + 5 H(+)(in) = a quinol + NAD(+) + 4 H(+)(out). NDH-1 shuttles electrons from NADH, via FMN and iron-sulfur (Fe-S) centers, to quinones in the respiratory chain. The immediate electron acceptor for the enzyme in this species is believed to be ubiquinone. Couples the redox reaction to proton translocation (for every two electrons transferred, four hydrogen ions are translocated across the cytoplasmic membrane), and thus conserves the redox energy in a proton gradient. The polypeptide is NADH-quinone oxidoreductase subunit D (Citrifermentans bemidjiense (strain ATCC BAA-1014 / DSM 16622 / JCM 12645 / Bem) (Geobacter bemidjiensis)).